Consider the following 577-residue polypeptide: MGKLIKLITTLTVLVSLLQYCCEFNSGSISCERTQTLCHYTNPRVWNTYFSRNCELYKNKVSPGFDIVARKYDTAVKPVIDDATVKVNKVAIQPAFKVIHSQCKKWNCGKYYQLGRSPMVKTRRFFFAKYNAFVKPNLDKFFTAEFRSHLKERILKYKNIGHYYFTITSRCIKSKYDFTVGNTEEKLMGKFKNKDTHGIHGSVTREPSSEDMVLTVSTMESDEEELTTTSTQTVVETITLDQEEASAVANHAHDDEASTDVEGSTDVNVNEQALLQEDFDMWSETILQKTQDVIQLFEKDVSKYINGKLVEEANHFKAKFQSLDDKSKKFFSKISLAINDIECVEGIDSETGKKIFFDKSGSTEISQYITRELVREYFNETRSTLDELTNAMEKDLSEITDEIEKKVNAIREENVEVFEEWGDIIVNEWSKRMAYVDVINAHMGADDDTTLDEEKAKSSVNWKKFLKGKKQIIESRDKLAHHSADLSRVNAFRQKVQKKILSFTQESGEFLYILRSKANLQFQERERKERERKEREKAAAEEFQRQQELLLQQEEEDEEDVSYTSTSTITTTTTMTL.

Residues 1 to 23 (MGKLIKLITTLTVLVSLLQYCCE) form the signal peptide. Coiled coils occupy residues 379–416 (NETRSTLDELTNAMEKDLSEITDEIEKKVNAIREENVE) and 513–561 (ILRS…EEDV). The span at 525 to 545 (RERKERERKEREKAAAEEFQR) shows a compositional bias: basic and acidic residues. Positions 525–577 (RERKERERKEREKAAAEEFQRQQELLLQQEEEDEEDVSYTSTSTITTTTTMTL) are disordered. The segment covering 562-577 (SYTSTSTITTTTTMTL) has biased composition (low complexity).

The protein belongs to the SHE10 family. Component of the mitochondria-localized RNase mitochondrial RNA-processing (RNase MRP) composed of one single RNA encoded by the NME1 gene and at least 31 proteins. Absent in the nucleus-localized RNase MRP (NuMRP).

It localises to the mitochondrion. Its function is as follows. Involved in spore wall assembly. May be a component of the mitochondrial RNase MRP (MtMRP), a ribonucleoprotein endoribonuclease involved in the cleaving RNA transcripts to generate primers for DNA replication in mitochondria. The polypeptide is Outer spore wall assembly protein SHE10 (Saccharomyces cerevisiae (strain JAY291) (Baker's yeast)).